Reading from the N-terminus, the 344-residue chain is S-adenosylmethionine:tRNA ribosyltransferase-isomerase (344 aa).

The protein belongs to the QueA family. As to quaternary structure, monomer.

It localises to the cytoplasm. The catalysed reaction is 7-aminomethyl-7-carbaguanosine(34) in tRNA + S-adenosyl-L-methionine = epoxyqueuosine(34) in tRNA + adenine + L-methionine + 2 H(+). Its pathway is tRNA modification; tRNA-queuosine biosynthesis. In terms of biological role, transfers and isomerizes the ribose moiety from AdoMet to the 7-aminomethyl group of 7-deazaguanine (preQ1-tRNA) to give epoxyqueuosine (oQ-tRNA). This Acinetobacter baylyi (strain ATCC 33305 / BD413 / ADP1) protein is S-adenosylmethionine:tRNA ribosyltransferase-isomerase.